The sequence spans 449 residues: Xylose isomerase (449 aa).

Residues H101 and D104 contribute to the active site. Mg(2+) contacts are provided by E232, E268, H271, D296, D307, D309, and D340.

It belongs to the xylose isomerase family. In terms of assembly, homotetramer. The cofactor is Mg(2+).

Its subcellular location is the cytoplasm. The enzyme catalyses alpha-D-xylose = alpha-D-xylulofuranose. The chain is Xylose isomerase from Bifidobacterium longum (strain DJO10A).